The primary structure comprises 196 residues: Adenylate kinase (196 aa).

10-15 is an ATP binding site; the sequence is GAGKGT. The NMP stretch occupies residues 30–59; sequence STGDMLRAAVSAGTEIGKRAKAVMDAGGLV. AMP is bound by residues threonine 31, arginine 36, 57–59, 85–88, and glutamine 92; these read GLV and GYPR. The interval 126–142 is LID; the sequence is NRVAETIAAGGTVRSDD. Arginine 127 is a binding site for ATP. Residues arginine 139 and arginine 150 each contribute to the AMP site. Residue alanine 178 participates in ATP binding.

The protein belongs to the adenylate kinase family. As to quaternary structure, monomer.

Its subcellular location is the cytoplasm. It carries out the reaction AMP + ATP = 2 ADP. Its pathway is purine metabolism; AMP biosynthesis via salvage pathway; AMP from ADP: step 1/1. Its function is as follows. Catalyzes the reversible transfer of the terminal phosphate group between ATP and AMP. Plays an important role in cellular energy homeostasis and in adenine nucleotide metabolism. The polypeptide is Adenylate kinase (Agrobacterium fabrum (strain C58 / ATCC 33970) (Agrobacterium tumefaciens (strain C58))).